The chain runs to 1042 residues: Disintegrin and metalloproteinase domain-containing protein unc-71 (1042 aa).

Positions 1 to 23 (MICASKITMLGLLVMCTLGGVLG) are cleaved as a signal peptide. Residues 24 to 746 (KVDIRQTTAN…NIGTTLETAT (723 aa)) lie on the Extracellular side of the membrane. N-linked (GlcNAc...) asparagine glycans are attached at residues N103 and N155. The Peptidase M12B domain occupies 227 to 431 (KYVEVALIAD…GNIQCLLNKP (205 aa)). Cystine bridges form between C338–C426, C378–C410, C380–C386, and C496–C516. The region spanning 437–524 (LRECGNGVVD…DCPPDGHLID (88 aa)) is the Disintegrin domain. N-linked (GlcNAc...) asparagine glycosylation is present at N538. The EGF-like domain maps to 662–699 (SATACPTNNLALLCSGHGHCTTTARCVCFNGWSGVACD). Disulfide bonds link C666–C681, C675–C687, and C689–C698. N-linked (GlcNAc...) asparagine glycosylation occurs at N703. A helical membrane pass occupies residues 747–767 (LFAILLGFGVFLLLCLVCLML). At 768–1042 (CYRRRSVVEI…KLEMTNSMHN (275 aa)) the chain is on the cytoplasmic side. Disordered stretches follow at residues 779 to 809 (KPSD…RKRK), 825 to 850 (DERD…RRNG), and 980 to 1028 (HDVG…PSLF). The span at 825 to 836 (DERDSTSLRSRD) shows a compositional bias: basic and acidic residues. Polar residues predominate over residues 1002–1027 (DSPTLVNGASSSSTSNNYNFRQSPSL).

It localises to the cell membrane. Its function is as follows. Involved in the migration of sex myoblasts (progenitors of egg-laying muscles), Q neuroblasts and BDU interneurons during development. Involved in axon branching and guidance of neurons including GABAergic type D motor neurons. Promotes sex myoblast migration and positioning independently of gonad attraction cues. May act downstream of mig-13 in order to promote the guidance, migration and positioning of Q neuroblasts and their descendants along the anteroposterior body axis. Required for coordinated movements. In Caenorhabditis elegans, this protein is Disintegrin and metalloproteinase domain-containing protein unc-71.